A 381-amino-acid polypeptide reads, in one-letter code: tRNA pseudouridine synthase Pus10 (381 aa).

The active-site Nucleophile is D226.

Belongs to the pseudouridine synthase Pus10 family.

The enzyme catalyses uridine(54) in tRNA = pseudouridine(54) in tRNA. The catalysed reaction is uridine(55) in tRNA = pseudouridine(55) in tRNA. In terms of biological role, responsible for synthesis of pseudouridine from uracil-54 and uracil-55 in the psi GC loop of transfer RNAs. This Nitrosopumilus maritimus (strain SCM1) protein is tRNA pseudouridine synthase Pus10.